An 814-amino-acid chain; its full sequence is DNA replication licensing factor Mcm6 (814 aa).

Residues 152 to 179 form a C4-type zinc finger; the sequence is CLDCQTEIRDVEQQFKFTNPTICRNPVC. An MCM domain is found at 339-545; the sequence is LYQNLINSLF…VVDYAIARKI (207 aa). 6 residues coordinate ATP: serine 392, threonine 393, alanine 394, lysine 395, serine 396, and asparagine 497. The short motif at 521 to 524 is the Arginine finger element; sequence SRFD. 2 residues coordinate ADP: arginine 612 and glutamate 615. The disordered stretch occupies residues 656-696; the sequence is DIHLDEEEGEENENVMDIGEETPEDTPRTNETEENDQDTPA. Acidic residues predominate over residues 659–679; the sequence is LDEEEGEENENVMDIGEETPE.

Belongs to the MCM family. Component of the Mcm2-7 complex. The complex forms a toroidal hexameric ring with the proposed subunit order Mcm2-Mcm6-Mcm4-Mcm7-Mcm3-Mcm5 (By simililarity). The heterodimers of Mcm4/Mcm6 and Mcm3/Mcm5 interact with Mcm2 and Mcm7.

The protein localises to the nucleus. It carries out the reaction ATP + H2O = ADP + phosphate + H(+). In terms of biological role, acts as a component of the MCM2-7 complex (MCM complex) which is the replicative helicase essential for 'once per cell cycle' DNA replication initiation and elongation in eukaryotic cells. Core component of CDC45-MCM-GINS (CMG) helicase, the molecular machine that unwinds template DNA during replication, and around which the replisome is built. The active ATPase sites in the MCM2-7 ring are formed through the interaction surfaces of two neighboring subunits such that a critical structure of a conserved arginine finger motif is provided in trans relative to the ATP-binding site of the Walker A box of the adjacent subunit. The six ATPase active sites, however, are likely to contribute differentially to the complex helicase activity. The protein is DNA replication licensing factor Mcm6 of Anopheles gambiae (African malaria mosquito).